A 709-amino-acid chain; its full sequence is DNA helicase/primase complex-associated protein (709 aa).

The segment at 141-176 is disordered; it reads SGDDGRDQQPPPVDGFGSEMEGEQTCPHAQRHSESP.

This sequence belongs to the herpesviridae HEPA family. As to quaternary structure, associates with the primase and the helicase to form the helicase-primase complex. Interacts with the origin-binding protein. Interacts with the polymerase catalytic subunit.

It is found in the host nucleus. In terms of biological role, component of the helicase/primase complex. Unwinds the DNA at the replication forks and generates single-stranded DNA for both leading and lagging strand synthesis. The primase synthesizes short RNA primers on the lagging strand that the polymerase presumably elongates using dNTPs. The primase-associated factor has no known catalytic activity in the complex and may serve to facilitate the formation of the replisome by directly interacting with the origin-binding protein and the polymerase. The sequence is that of DNA helicase/primase complex-associated protein from Epstein-Barr virus (strain B95-8) (HHV-4).